Here is a 471-residue protein sequence, read N- to C-terminus: Adenosylhomocysteinase (471 aa).

Substrate-binding residues include Thr-58, Asp-133, and Glu-195. 196-198 is a binding site for NAD(+); sequence TTT. The substrate site is built by Lys-225 and Asp-229. Residues Asn-230, 259 to 264, Glu-282, Asn-317, 338 to 340, and Asn-383 contribute to the NAD(+) site; these read GFGDVG and IGH.

Belongs to the adenosylhomocysteinase family. NAD(+) serves as cofactor.

The protein resides in the cytoplasm. It carries out the reaction S-adenosyl-L-homocysteine + H2O = L-homocysteine + adenosine. It functions in the pathway amino-acid biosynthesis; L-homocysteine biosynthesis; L-homocysteine from S-adenosyl-L-homocysteine: step 1/1. In terms of biological role, may play a key role in the regulation of the intracellular concentration of adenosylhomocysteine. The polypeptide is Adenosylhomocysteinase (Rhodopseudomonas palustris (strain BisB5)).